The chain runs to 291 residues: Transmembrane protein 41B (291 aa).

Over residues methionine 1–proline 11 the composition is skewed to basic and acidic residues. The interval methionine 1 to proline 43 is disordered. Threonine 18 carries the phosphothreonine modification. Serine 35 carries the phosphoserine modification. The next 6 membrane-spanning stretches (helical) occupy residues threonine 52–tyrosine 72, phenylalanine 109–isoleucine 129, leucine 147–leucine 169, leucine 197–isoleucine 217, proline 225–isoleucine 245, and serine 262–phenylalanine 282. A VTT domain; required for its function in autophagy region spans residues glycine 140–leucine 251.

The protein belongs to the TMEM41 family. In terms of assembly, interacts with VMP1. Interacts with COPA, COPB1, VDAC1 and ERLIN2. Interacts with ATG2A. Interacts with SURF4. Expressed in brain, spinal cord, kidney and first lumbar dorsal root ganglia during postnatal development. Expressed in motor neurons and proprioceptive neurons.

It localises to the endoplasmic reticulum membrane. It is found in the endomembrane system. The catalysed reaction is a 1,2-diacyl-sn-glycero-3-phospho-L-serine(in) = a 1,2-diacyl-sn-glycero-3-phospho-L-serine(out). It catalyses the reaction cholesterol(in) = cholesterol(out). The enzyme catalyses a 1,2-diacyl-sn-glycero-3-phosphocholine(in) = a 1,2-diacyl-sn-glycero-3-phosphocholine(out). It carries out the reaction a 1,2-diacyl-sn-glycero-3-phosphoethanolamine(in) = a 1,2-diacyl-sn-glycero-3-phosphoethanolamine(out). Its function is as follows. Phospholipid scramblase involved in lipid homeostasis and membrane dynamics processes. Has phospholipid scramblase activity toward cholesterol and phosphatidylserine, as well as phosphatidylethanolamine and phosphatidylcholine. Required for autophagosome formation: participates in early stages of autophagosome biogenesis at the endoplasmic reticulum (ER) membrane by reequilibrating the leaflets of the ER as lipids are extracted by ATG2 (ATG2A or ATG2B) to mediate autophagosome assembly. In addition to autophagy, involved in other processes in which phospholipid scramblase activity is required. Required for normal motor neuron development. The sequence is that of Transmembrane protein 41B from Mus musculus (Mouse).